Here is a 333-residue protein sequence, read N- to C-terminus: Taste receptor type 2 member 38 (333 aa).

Topologically, residues Met1–Thr17 are extracellular. The helical transmembrane segment at Phe18 to Leu38 threads the bilayer. Over Val39–Cys55 the chain is Cytoplasmic. Residues Val56–Ile76 traverse the membrane as a helical segment. Residues Gln77–Ala94 lie on the Extracellular side of the membrane. The helical transmembrane segment at Ile95–Leu115 threads the bilayer. Topologically, residues Leu116 to Gln142 are cytoplasmic. The chain crosses the membrane as a helical span at residues Met143–Phe163. The Extracellular portion of the chain corresponds to Ser164–Asn190. Residue Asn178 is glycosylated (N-linked (GlcNAc...) asparagine). The chain crosses the membrane as a helical span at residues Leu191–Val211. Residues Ser212 to Ser251 lie on the Cytoplasmic side of the membrane. A helical transmembrane segment spans residues Phe252–Leu272. Residues Trp273–Lys276 lie on the Extracellular side of the membrane. A helical transmembrane segment spans residues Ile277 to Leu297. The Cytoplasmic segment spans residues Ile298–Cys333.

Belongs to the G-protein coupled receptor T2R family.

The protein localises to the membrane. Functionally, receptor that may play a role in the perception of bitterness and is gustducin-linked. May play a role in sensing the chemical composition of the gastrointestinal content. The activity of this receptor may stimulate alpha gustducin, mediate PLC-beta-2 activation and lead to the gating of TRPM5. The protein is Taste receptor type 2 member 38 (TAS2R38) of Pongo pygmaeus (Bornean orangutan).